Reading from the N-terminus, the 1278-residue chain is Dynactin subunit 1 (1278 aa).

The tract at residues 1–25 (MAQSKRHVYSRTPSGSRMSAEASAR) is disordered. Residues 48-90 (GATLFATGKWVGVILDEAKGKNDGTVQGRKYFTCDEGHGIFVR) enclose the CAP-Gly domain. The disordered stretch occupies residues 100 to 223 (GADTTSPETP…SKEEEGLRAQ (124 aa)). Over residues 102 to 114 (DTTSPETPDSSAS) the composition is skewed to polar residues. Phosphothreonine is present on threonine 108. A compositionally biased stretch (basic residues) spans 129–152 (SKLRGLKPKKAPTARKTTTRRPKP). Residues threonine 145, threonine 146, and threonine 147 each carry the phosphothreonine; by SLK modification. Residues 161–184 (AGASSSLGPSGSASAGELSSSEPS) show a composition bias toward low complexity. Serine 179 is subject to Phosphoserine; by PLK1. Serine 212 is subject to Phosphoserine; by CDK1. 3 coiled-coil regions span residues 213–547 (PSKE…RQQQ), 943–1049 (LKLE…EGLR), and 1182–1211 (SAQL…KETV). Residues 214–223 (SKEEEGLRAQ) are compositionally biased toward basic and acidic residues. The interaction with HPS6 stretch occupies residues 911–1278 (EYDAERPPSK…LHQLHSRLIS (368 aa)).

The protein belongs to the dynactin 150 kDa subunit family. In terms of assembly, monomer and homodimer. Subunit of dynactin, a multiprotein complex part of a tripartite complex with dynein and a adapter, such as BICDL1, BICD2 or HOOK3. The dynactin complex is built around ACTR1A/ACTB filament and consists of an actin-related filament composed of a shoulder domain, a pointed end and a barbed end. Its length is defined by its flexible shoulder domain. The soulder is composed of 2 DCTN1 subunits, 4 DCTN2 and 2 DCTN3. DCTN1/p150(glued) binds directly to microtubules and to cytoplasmic dynein. The 4 DCNT2 (via N-terminus) bind the ACTR1A filament and act as molecular rulers to determine the length. The pointed end is important for binding dynein-dynactin cargo adapters. Consists of 4 subunits: ACTR10, DCNT4, DCTN5 and DCTN6. The barbed end is composed of a CAPZA1:CAPZB heterodimers, which binds ACTR1A/ACTB filament and dynactin and stabilizes dynactin. Interacts with the C-terminus of MAPRE1, MAPRE2 and MAPRE3. Interacts (via C-terminus) with SNX6. Interacts with CLN3, DYNAP, ECPAS and FBXL5. Interacts with MISP; this interaction regulates its distribution at the cell cortex. Interacts with CEP131. Interacts with CEP126. Interacts with CLIP1. Interacts with dynein intermediate chain and dynein heavy chain. Interacts with PLK1 (via POLO-box domain). Interacts with TBCB. Binds preferentially to tyrosinated microtubules than to detyrosinated microtubules. Interacts with PARD6A. Interacts with HPS6. Interacts with KIF3A. Interacts with BICD2. Interacts with DST (isoform 9). Interacts with DST (isoform 1). Identified in a complex with MREG and RILP. Interacts with BCCIP (isoform 2/alpha). Interacts with DCDC1. Interacts with AKNA. Interacts with DYNC1I2. Interacts with RUFY3 and RUFY4. Post-translationally, ubiquitinated by a SCF complex containing FBXL5, leading to its degradation by the proteasome. In terms of processing, phosphorylation by SLK at Thr-145, Thr-146 and Thr-147 targets DCTN1 to the centrosome. It is uncertain if SLK phosphorylates all three threonines or one or two of them. PLK1-mediated phosphorylation at Ser-179 is essential for its localization in the nuclear envelope, promotes its dissociation from microtubules during early mitosis and positively regulates nuclear envelope breakdown during prophase. Brain.

It localises to the cytoplasm. The protein localises to the cytoskeleton. The protein resides in the microtubule organizing center. It is found in the centrosome. Its subcellular location is the centriole. It localises to the spindle. The protein localises to the nucleus envelope. The protein resides in the cell cortex. In terms of biological role, part of the dynactin complex that activates the molecular motor dynein for ultra-processive transport along microtubules. Plays a key role in dynein-mediated retrograde transport of vesicles and organelles along microtubules by recruiting and tethering dynein to microtubules. Binds to both dynein and microtubules providing a link between specific cargos, microtubules and dynein. Essential for targeting dynein to microtubule plus ends, recruiting dynein to membranous cargos and enhancing dynein processivity (the ability to move along a microtubule for a long distance without falling off the track). Can also act as a brake to slow the dynein motor during motility along the microtubule. Can regulate microtubule stability by promoting microtubule formation, nucleation and polymerization and by inhibiting microtubule catastrophe in neurons. Inhibits microtubule catastrophe by binding both to microtubules and to tubulin, leading to enhanced microtubule stability along the axon. Plays a role in metaphase spindle orientation. Plays a role in centriole cohesion and subdistal appendage organization and function. Its recruitment to the centriole in a KIF3A-dependent manner is essential for the maintenance of centriole cohesion and the formation of subdistal appendage. Also required for microtubule anchoring at the mother centriole. Plays a role in primary cilia formation. The polypeptide is Dynactin subunit 1 (Homo sapiens (Human)).